Here is a 329-residue protein sequence, read N- to C-terminus: Ketol-acid reductoisomerase (NADP(+)) (329 aa).

The KARI N-terminal Rossmann domain maps to 2–181; that stretch reads MKKYYESDAD…GATRAVVLET (180 aa). NADP(+) contacts are provided by residues 25–28, Arg48, Ser52, and 82–85; these read YGSQ and DELQ. His107 is a catalytic residue. Position 133 (Gly133) interacts with NADP(+). In terms of domain architecture, KARI C-terminal knotted spans 182-327; that stretch reads TFREETETDL…KEVRAMMPQF (146 aa). Mg(2+) contacts are provided by Asp190, Glu194, Glu226, and Glu230. Ser251 is a substrate binding site.

The protein belongs to the ketol-acid reductoisomerase family. Mg(2+) serves as cofactor.

It carries out the reaction (2R)-2,3-dihydroxy-3-methylbutanoate + NADP(+) = (2S)-2-acetolactate + NADPH + H(+). The enzyme catalyses (2R,3R)-2,3-dihydroxy-3-methylpentanoate + NADP(+) = (S)-2-ethyl-2-hydroxy-3-oxobutanoate + NADPH + H(+). The protein operates within amino-acid biosynthesis; L-isoleucine biosynthesis; L-isoleucine from 2-oxobutanoate: step 2/4. Its pathway is amino-acid biosynthesis; L-valine biosynthesis; L-valine from pyruvate: step 2/4. In terms of biological role, involved in the biosynthesis of branched-chain amino acids (BCAA). Catalyzes an alkyl-migration followed by a ketol-acid reduction of (S)-2-acetolactate (S2AL) to yield (R)-2,3-dihydroxy-isovalerate. In the isomerase reaction, S2AL is rearranged via a Mg-dependent methyl migration to produce 3-hydroxy-3-methyl-2-ketobutyrate (HMKB). In the reductase reaction, this 2-ketoacid undergoes a metal-dependent reduction by NADPH to yield (R)-2,3-dihydroxy-isovalerate. The protein is Ketol-acid reductoisomerase (NADP(+)) of Methanoregula boonei (strain DSM 21154 / JCM 14090 / 6A8).